The primary structure comprises 510 residues: Inositol-3-phosphate synthase (510 aa).

The NAD(+) site is built by glycine 70, glycine 71, asparagine 72, asparagine 73, aspartate 143, isoleucine 180, glutamine 190, arginine 193, threonine 230, alanine 231, asparagine 232, threonine 233, glycine 281, serine 282, aspartate 306, serine 309, asparagine 340, asparagine 341, aspartate 342, lysine 355, glycine 393, aspartate 394, aspartate 422, and serine 423.

It belongs to the myo-inositol 1-phosphate synthase family. NAD(+) is required as a cofactor.

The protein localises to the cytoplasm. The protein resides in the cytosol. Its subcellular location is the nucleus. The catalysed reaction is D-glucose 6-phosphate = 1D-myo-inositol 3-phosphate. It participates in polyol metabolism; myo-inositol biosynthesis; myo-inositol from D-glucose 6-phosphate: step 1/2. Functionally, key enzyme in myo-inositol biosynthesis pathway that catalyzes the conversion of glucose 6-phosphate to 1-myo-inositol 1-phosphate in a NAD-dependent manner. The protein is Inositol-3-phosphate synthase of Nicotiana tabacum (Common tobacco).